We begin with the raw amino-acid sequence, 179 residues long: Calcineurin subunit B type 2 (179 aa).

The N-myristoyl glycine moiety is linked to residue Gly2. 4 EF-hand domains span residues 18–53, 57–85, 87–122, and 128–163; these read EEIRRLGKSFRKLDLDKSGSLSIEEFMRLPELQQNP, RVIDIFDTDGNGEVDFHEFIVGTSQFSVK, DEEQKLRFAFRIYDMDNDGFISNGELFQVLKMMVGN, and QLQQLVDKSILVLDKDGDGRISFEEFSDVVKTMEIH. Asp31, Asp33, Ser35, Ser37, Glu42, Asp63, Asp65, Asn67, Glu69, Glu74, Asp100, Asp102, Asp104, and Glu111 together coordinate Ca(2+). Positions 131 to 136 are calcineurin A binding; it reads QLVDKS. Ca(2+) contacts are provided by Asp141, Asp143, Asp145, Arg147, and Glu152.

This sequence belongs to the calcineurin regulatory subunit family. Forms a complex composed of a calmodulin-dependent catalytic subunit (also known as calcineurin A) and a regulatory Ca(2+)-binding subunit (also known as calcineurin B). There are three catalytic subunits, each encoded by a separate gene (PPP3CA, PPP3CB, and PPP3CC) and two regulatory subunits which are also encoded by separate genes (PPP3R1 and PPP3R2). Interacts with SPATA33 (via PQIIIT motif). Expressed in osteoblasts and bone marrow (at protein level). Expressed in the testis. Expressed in the sperm midpiece in a SPATA33-dependent manner (at protein level).

The protein localises to the mitochondrion. Regulatory subunit of calcineurin, a calcium-dependent, calmodulin stimulated protein phosphatase. Confers calcium sensitivity. In Mus musculus (Mouse), this protein is Calcineurin subunit B type 2 (Ppp3r2).